A 241-amino-acid polypeptide reads, in one-letter code: U2 small nuclear ribonucleoprotein B'' (241 aa).

The region spanning 12 to 91 (QTLYVNNLYE…RPMKIQYCKS (80 aa)) is the RRM 1 domain. Over residues 99–126 (LDGTYMEKKREREENDKKGSNKKQDRKS) the composition is skewed to basic and acidic residues. Residues 99–169 (LDGTYMEKKR…PRDDPPNKTL (71 aa)) are disordered. Low complexity predominate over residues 129–152 (QQQQQQKRPGAPTSTTSTTSPTTS). An RRM 2 domain is found at 167–241 (KTLFVENLPD…KPMVVSFAAQ (75 aa)).

Belongs to the RRM U1 A/B'' family. As to quaternary structure, identified in the spliceosome B complex. Identified in the spliceosome C complex.

Its subcellular location is the nucleus. Involved in pre-mRNA splicing as component of the spliceosome. Associated with sn-RNP U2, where it contributes to the binding of stem loop IV of U2 snRNA. The sequence is that of U2 small nuclear ribonucleoprotein B'' (snrpb2) from Dictyostelium discoideum (Social amoeba).